The chain runs to 571 residues: Mannan endo-1,4-beta-mannosidase B (571 aa).

The signal sequence occupies residues 1-19; the sequence is MNSLSLLLFCIFFVFSTFA. The CBM6 domain maps to 22–141; it reads VYYEAENGKL…WMWVDAFVIN (120 aa). The 295-residue stretch at 165–459 folds into the GH26 domain; sequence PAAKKLYDFL…FTHKTVMNMD (295 aa). Tryptophan 286 lines the substrate pocket. Glutamate 319 acts as the Proton donor in catalysis. 2 residues coordinate substrate: tryptophan 324 and tyrosine 379. Glutamate 407 (nucleophile) is an active-site residue. CBM10 domains lie at 491 to 527 and 534 to 571; these read ECFS…CGIG and VCWS…CGII.

The protein belongs to the glycosyl hydrolase 26 family.

It carries out the reaction Random hydrolysis of (1-&gt;4)-beta-D-mannosidic linkages in mannans, galactomannans and glucomannans.. The polypeptide is Mannan endo-1,4-beta-mannosidase B (MANB) (Piromyces sp).